Consider the following 512-residue polypeptide: D-alanine--D-alanyl carrier protein ligase (512 aa).

Residue 152 to 153 (TS) participates in ATP binding. Asp199 provides a ligand contact to D-alanine. Residue 294-299 (NAYGPT) coordinates ATP. Val303 provides a ligand contact to D-alanine. Residues Asp385, 397–400 (YGGR), and Lys499 contribute to the ATP site. Lys499 is a D-alanine binding site.

Belongs to the ATP-dependent AMP-binding enzyme family. DltA subfamily.

Its subcellular location is the cytoplasm. It carries out the reaction holo-[D-alanyl-carrier protein] + D-alanine + ATP = D-alanyl-[D-alanyl-carrier protein] + AMP + diphosphate. It participates in cell wall biogenesis; lipoteichoic acid biosynthesis. Its function is as follows. Catalyzes the first step in the D-alanylation of lipoteichoic acid (LTA), the activation of D-alanine and its transfer onto the D-alanyl carrier protein (Dcp) DltC. In an ATP-dependent two-step reaction, forms a high energy D-alanyl-AMP intermediate, followed by transfer of the D-alanyl residue as a thiol ester to the phosphopantheinyl prosthetic group of the Dcp. D-alanylation of LTA plays an important role in modulating the properties of the cell wall in Gram-positive bacteria, influencing the net charge of the cell wall. The polypeptide is D-alanine--D-alanyl carrier protein ligase (Streptococcus pyogenes serotype M3 (strain SSI-1)).